Reading from the N-terminus, the 655-residue chain is Interferon-induced GTP-binding protein Mx2 (655 aa).

Polar residues predominate over residues 1–18 (MVLSTEENTGVDSVNLPS). A disordered region spans residues 1 to 28 (MVLSTEENTGVDSVNLPSGETGLGEKDQ). In terms of domain architecture, Dynamin-type G spans 60-333 (DLALPAIAVI…LISHICKSLP (274 aa)). Positions 70–77 (GDQSSGKS) are G1 motif. 70-77 (GDQSSGKS) serves as a coordination point for GTP. Residues 95-97 (VTR) are G2 motif. The G3 motif stretch occupies residues 171–174 (DLPG). GTP-binding positions include 171–175 (DLPGI) and 240–243 (TKPD). Residues 240–243 (TKPD) form a G4 motif region. The tract at residues 272–275 (KCRG) is G5 motif. The interval 542–562 (EAEEEKKTKHGTSSSSQSQDL) is disordered. Residues 552-562 (GTSSSSQSQDL) show a composition bias toward low complexity. The GED domain maps to 567 to 655 (MAEIFQHLNA…ARRRLAKFPG (89 aa)).

The protein belongs to the TRAFAC class dynamin-like GTPase superfamily. Dynamin/Fzo/YdjA family.

It localises to the cytoplasm. Functionally, interferon-induced dynamin-like GTPase with antiviral activity against vesicular stomatitis virus (VSV) and Hantaan virus (HNTV). The protein is Interferon-induced GTP-binding protein Mx2 (Mx2) of Mus musculus (Mouse).